The sequence spans 237 residues: Indole-3-glycerol phosphate synthase (237 aa).

This sequence belongs to the TrpC family.

The enzyme catalyses 1-(2-carboxyphenylamino)-1-deoxy-D-ribulose 5-phosphate + H(+) = (1S,2R)-1-C-(indol-3-yl)glycerol 3-phosphate + CO2 + H2O. The protein operates within amino-acid biosynthesis; L-tryptophan biosynthesis; L-tryptophan from chorismate: step 4/5. This Thermoplasma volcanium (strain ATCC 51530 / DSM 4299 / JCM 9571 / NBRC 15438 / GSS1) protein is Indole-3-glycerol phosphate synthase.